A 147-amino-acid chain; its full sequence is Ribosome-binding factor A (147 aa).

The tract at residues 126-147 (LKKNAQPAGDAHPYKDDDAMND) is disordered. Residues 137-147 (HPYKDDDAMND) show a composition bias toward basic and acidic residues.

It belongs to the RbfA family. As to quaternary structure, monomer. Binds 30S ribosomal subunits, but not 50S ribosomal subunits or 70S ribosomes.

The protein localises to the cytoplasm. Functionally, one of several proteins that assist in the late maturation steps of the functional core of the 30S ribosomal subunit. Associates with free 30S ribosomal subunits (but not with 30S subunits that are part of 70S ribosomes or polysomes). Required for efficient processing of 16S rRNA. May interact with the 5'-terminal helix region of 16S rRNA. The chain is Ribosome-binding factor A from Corynebacterium diphtheriae (strain ATCC 700971 / NCTC 13129 / Biotype gravis).